The primary structure comprises 397 residues: Elongation factor Tu (397 aa).

A tr-type G domain is found at K10–E206. The G1 stretch occupies residues G19–T26. G19–T26 contributes to the GTP binding site. T26 provides a ligand contact to Mg(2+). Residues G62–S66 are G2. Residues D83–G86 are G3. GTP is bound by residues D83 to H87 and N138 to D141. A G4 region spans residues N138 to D141. The interval S176–L178 is G5.

The protein belongs to the TRAFAC class translation factor GTPase superfamily. Classic translation factor GTPase family. EF-Tu/EF-1A subfamily. In terms of assembly, monomer.

The protein resides in the cytoplasm. It carries out the reaction GTP + H2O = GDP + phosphate + H(+). GTP hydrolase that promotes the GTP-dependent binding of aminoacyl-tRNA to the A-site of ribosomes during protein biosynthesis. The polypeptide is Elongation factor Tu (Streptomyces cinnamoneus (Streptoverticillium cinnamoneum)).